The primary structure comprises 576 residues: Trehalase 2 (576 aa).

This sequence belongs to the glycosyl hydrolase 15 family.

It carries out the reaction alpha,alpha-trehalose + H2O = alpha-D-glucose + beta-D-glucose. Its pathway is glycan degradation; trehalose degradation; D-glucose from alpha,alpha-trehalose: step 1/1. Its function is as follows. Catalyzes the hydrolysis of alpha,alpha-trehalose into two molecules of D-glucose. This is Trehalase 2 (treH2) from Sulfolobus acidocaldarius (strain ATCC 33909 / DSM 639 / JCM 8929 / NBRC 15157 / NCIMB 11770).